Consider the following 516-residue polypeptide: Prolyl 4-hydroxylase subunit alpha-1 (516 aa).

N97 carries an N-linked (GlcNAc...) asparagine glycan. The stretch at 189-222 is one TPR repeat; it reads VYILDYLSYAVYQQGDLSKAMMLTKRLLELDPEH. N243 carries an N-linked (GlcNAc...) asparagine glycan. Residues 393 to 501 form the Fe2OG dioxygenase domain; the sequence is TAEELQVANY…KWVSNKWLHE (109 aa). The Fe cation site is built by H411, D413, and H482. K492 contacts 2-oxoglutarate.

Belongs to the P4HA family. In terms of assembly, heterotetramer of two alpha chains and two beta chains (the beta chain is the multi-functional PDI). Fe(2+) serves as cofactor. L-ascorbate is required as a cofactor.

The protein resides in the endoplasmic reticulum lumen. It catalyses the reaction L-prolyl-[collagen] + 2-oxoglutarate + O2 = trans-4-hydroxy-L-prolyl-[collagen] + succinate + CO2. In terms of biological role, catalyzes the post-translational formation of 4-hydroxyproline in -Xaa-Pro-Gly- sequences in collagens and other proteins. This Gallus gallus (Chicken) protein is Prolyl 4-hydroxylase subunit alpha-1 (P4HA1).